A 201-amino-acid chain; its full sequence is Protein VirD3 (201 aa).

Disordered regions lie at residues 28-51 and 139-171; these read ASSSALSNVQGDVRDRPIPTSSSR and RVNSDRRLPTDAENHPETRDPRKGRGSHGVTPA. Over residues 141–161 the composition is skewed to basic and acidic residues; sequence NSDRRLPTDAENHPETRDPRK.

The sequence is that of Protein VirD3 (virD3) from Rhizobium radiobacter (Agrobacterium tumefaciens).